Here is a 110-residue protein sequence, read N- to C-terminus: Large ribosomal subunit protein bL20 (110 aa).

The protein belongs to the bacterial ribosomal protein bL20 family.

Functionally, binds directly to 23S ribosomal RNA and is necessary for the in vitro assembly process of the 50S ribosomal subunit. It is not involved in the protein synthesizing functions of that subunit. In Shigella boydii serotype 4 (strain Sb227), this protein is Large ribosomal subunit protein bL20.